A 519-amino-acid polypeptide reads, in one-letter code: MLPDTGILSPFTTAVNPDPPQSQTLRVPRPTPVLDRPTTDSTANKRVKLDPTVSKVPWEPSVKPSSSKVEGASGLEQDSFMPTLGSVFKKKKKDKEATRLKDSSGNPDTIIEDSPVTPSTERSLSQSLGSAPSTATTANSHGGLSTVTSATSQTPTSPIATGGQAEKDHPMTTPVNESAGHSRSDSQTLQKAENAVRATKGKYTLQDFNFQRTLGTGSFGRVHLVQSKHNLRFYAVKVLKKAQVVKMKQVEHTNDERRMLQRVKHPFLITLWGTFQDAKNLYMVMDFIEGGELFSLLRKSQRFPNPVAKFYAAEVALALDYLHSMNIIYRDLKPENLLLDRHGHLKITDFGFAKEVPDITWTLCGTPDYLAPEVVASKGYNKSVDWWSLGILIFEMLCGYTPFWDGGSPMKIYENILRGRVKYPAYIHPDAMNLLQQLITPDLTKRLGNLYHGSRSVLEHPWFAEVNWERLLSKQIEPPYVPPVRGGIGDASLFDKYPEETEEYGKDGPDQYGHFFTDF.

The tract at residues 1–195 (MLPDTGILSP…SQTLQKAENA (195 aa)) is disordered. 3 stretches are compositionally biased toward polar residues: residues 10–25 (PFTT…SQTL), 116–159 (VTPS…TSPI), and 173–191 (TPVN…TLQK). One can recognise a Protein kinase domain in the interval 208 to 463 (FNFQRTLGTG…SRSVLEHPWF (256 aa)). Residues 214-222 (LGTGSFGRV) and lysine 237 each bind ATP. The active-site Proton acceptor is aspartate 331. Residues 464–519 (AEVNWERLLSKQIEPPYVPPVRGGIGDASLFDKYPEETEEYGKDGPDQYGHFFTDF) enclose the AGC-kinase C-terminal domain.

This sequence belongs to the protein kinase superfamily. Ser/Thr protein kinase family.

The enzyme catalyses L-seryl-[protein] + ATP = O-phospho-L-seryl-[protein] + ADP + H(+). It catalyses the reaction L-threonyl-[protein] + ATP = O-phospho-L-threonyl-[protein] + ADP + H(+). With respect to regulation, activated by cAMP. Functionally, functions downstream of adenylate cyclase to regulate trap-development for nematode capture. This Arthrobotrys oligospora (strain ATCC 24927 / CBS 115.81 / DSM 1491) (Nematode-trapping fungus) protein is cAMP-dependent protein kinase catalytic subunit.